Consider the following 641-residue polypeptide: RING finger containing E3 ubiquitin-protein ligase WSV403 (641 aa).

Residues 329-371 (CVGCLYDIEDEKRCYKLPCGHFMHTFCLSNKCSKANFRCVKCF) form an RING-type; atypical zinc finger.

It catalyses the reaction S-ubiquitinyl-[E2 ubiquitin-conjugating enzyme]-L-cysteine + [acceptor protein]-L-lysine = [E2 ubiquitin-conjugating enzyme]-L-cysteine + N(6)-ubiquitinyl-[acceptor protein]-L-lysine.. Its pathway is protein modification; protein ubiquitination. Probable E3 ubiquitin-protein ligase which accepts ubiquitin from an E2 ubiquitin-conjugating enzyme in the form of a thioester and then directly transfers the ubiquitin to targeted substrates. The protein is RING finger containing E3 ubiquitin-protein ligase WSV403 of White spot syndrome virus (isolate Shrimp/China/Tongan/1996) (WSSV).